We begin with the raw amino-acid sequence, 406 residues long: Mitochondrial potassium channel (406 aa).

A mitochondrion-targeting transit peptide spans 1-35 (MTGCSPVFAMQHVVGVPRILVRRTFLGTDVTMTRT). Over 36 to 198 (LCSPGPREKR…KERTRAERTK (163 aa)) the chain is Mitochondrial matrix. A coiled-coil region spans residues 113-140 (VREAREGLEAQQTKLKEVRDRLDRVSRE). A helical membrane pass occupies residues 199–219 (NWSLIGSVLGALIGVAGSTYV). Topologically, residues 220-382 (NRVRLQELKA…LEAQANRNTV (163 aa)) are mitochondrial intermembrane. The chain crosses the membrane as a helical span at residues 383-403 (SSTLVTCVTFLATLPLLYMLF). Over 404–406 (KTS) the chain is Mitochondrial matrix.

As to quaternary structure, the mitochondrial potassium channel (mitoK(ATP)) is composed of 4 subunits of CCDC51/MITOK and 4 subunits of ABCB8/MITOSUR.

It is found in the mitochondrion inner membrane. The catalysed reaction is K(+)(in) = K(+)(out). Inhibited by ATP via mitoK(ATP) channel. In terms of biological role, pore-forming subunit of the mitochondrial ATP-gated potassium channel (mitoK(ATP)). Together with ATP-binding subunit ABCB8/MITOSUR of the mitoK(ATP) channel, mediates ATP-dependent K(+) currents across the mitochondrial inner membrane. An increase in ATP intracellular levels closes the channel, inhibiting K(+) transport, whereas a decrease in ATP levels enhances K(+) uptake in the mitochondrial matrix. May contribute to the homeostatic control of cellular metabolism under stress conditions by regulating the mitochondrial matrix volume. In Mus musculus (Mouse), this protein is Mitochondrial potassium channel.